Consider the following 360-residue polypeptide: uncharacterized protein (360 aa).

The next 7 membrane-spanning stretches (helical) occupy residues 26–48, 58–80, 89–111, 126–148, 169–191, 195–214, and 227–249; these read SVCY…SGAT, LHPL…ASVL, VMGL…NIAH, LSTG…SILA, RLAY…PTAL, IPSV…YALL, and CALC…SHMV.

Its subcellular location is the cell membrane. This is an uncharacterized protein from Treponema pallidum (strain Nichols).